We begin with the raw amino-acid sequence, 208 residues long: Small ribosomal subunit protein uS4 (208 aa).

Residues Arg-98–Met-161 enclose the S4 RNA-binding domain.

It belongs to the universal ribosomal protein uS4 family. In terms of assembly, part of the 30S ribosomal subunit. Contacts protein S5. The interaction surface between S4 and S5 is involved in control of translational fidelity.

Functionally, one of the primary rRNA binding proteins, it binds directly to 16S rRNA where it nucleates assembly of the body of the 30S subunit. In terms of biological role, with S5 and S12 plays an important role in translational accuracy. The sequence is that of Small ribosomal subunit protein uS4 from Helicobacter acinonychis (strain Sheeba).